Here is a 140-residue protein sequence, read N- to C-terminus: uncharacterized protein (140 aa).

Positions 1-19 (MGLCGSKTQPMPSQTTTVA) are enriched in polar residues. The disordered stretch occupies residues 1 to 140 (MGLCGSKTQP…ERERENMIYD (140 aa)). G2 carries N-myristoyl glycine lipidation. Residue C4 is the site of S-palmitoyl cysteine attachment. A compositionally biased stretch (basic and acidic residues) spans 27 to 40 (INRDTVKSKQELRH). The span at 41 to 51 (KEKKDKKKKTQ) shows a compositional bias: basic residues. The span at 73–140 (DPSKNKVSPK…ERERENMIYD (68 aa)) shows a compositional bias: basic and acidic residues.

To S.pombe new13. Myristoylated. In terms of processing, the N-myristoylated protein is further palmitoylated by ERF2, PFA4 and slightly by PFA5, but not by PFA3.

It localises to the cytoplasm. It is found in the cytosol. This is an uncharacterized protein from Saccharomyces cerevisiae (strain ATCC 204508 / S288c) (Baker's yeast).